The primary structure comprises 553 residues: Heterochromatin protein 1-binding protein 3 (553 aa).

An N-acetylalanine modification is found at Ala-2. Position 6 is a phosphoserine (Ser-6). The segment at 30-131 (LGEKADDSTM…SKEKEKKVKK (102 aa)) is disordered. At Thr-51 the chain carries Phosphothreonine. Residues 60-71 (GEEEKPEPDGSS) are compositionally biased toward acidic residues. Lys-64 is covalently cross-linked (Glycyl lysine isopeptide (Lys-Gly) (interchain with G-Cter in SUMO2)). Phosphothreonine is present on Thr-85. Over residues 91 to 127 (REAEQPKGEPESGEKEESKSAEETKKEEKDQSKEKEK) the composition is skewed to basic and acidic residues. A Glycyl lysine isopeptide (Lys-Gly) (interchain with G-Cter in SUMO2) cross-link involves residue Lys-97. A phosphoserine mark is found at Ser-142, Ser-155, and Ser-156. The 76-residue stretch at 157-232 (PRPKMDAILT…GASGSFVVVQ (76 aa)) folds into the H15 1 domain. At Lys-190 the chain carries N6-acetyllysine. The interval 231-251 (VQKSKTPQKSKNRKKGSAVDP) is disordered. A compositionally biased stretch (basic residues) spans 236–246 (TPQKSKNRKKG). Phosphoserine is present on Ser-247. Positions 253-257 (PQVKL) match the PxVxL motif motif. 2 consecutive H15 domains span residues 253–328 (PQVK…QLKK) and 335–411 (LGGS…QLCF). Lys-256 participates in a covalent cross-link: Glycyl lysine isopeptide (Lys-Gly) (interchain with G-Cter in SUMO2). Positions 422-553 (PKKVSDGSED…MKKKSFKTKK (132 aa)) are disordered. Residues 428–449 (GSEDEDEEEDEEESSEDSEDEE) show a composition bias toward acidic residues. 3 positions are modified to phosphoserine: Ser-441, Ser-442, and Ser-445. 2 stretches are compositionally biased toward basic residues: residues 488 to 509 (GKVR…RKGR) and 542 to 553 (SAMKKKSFKTKK).

As to quaternary structure, interacts (via PxVxL motif) with CBX5.

It localises to the nucleus. It is found in the chromosome. Component of heterochromatin that maintains heterochromatin integrity during G1/S progression and regulates the duration of G1 phase to critically influence cell proliferative capacity. May play a role in hypoxia-induced oncogenesis. The chain is Heterochromatin protein 1-binding protein 3 (Hp1bp3) from Rattus norvegicus (Rat).